Here is a 280-residue protein sequence, read N- to C-terminus: Fe-S cluster assembly protein DRE2 (280 aa).

The segment at 1-121 (MSNLLVFDNS…TTLLKKSGGG (121 aa)) is N-terminal SAM-like domain. Residues 122–176 (PKKFAFKRASPATAAPSTNGTNPAATVNLNSVVTLSMDDDDLMDEDDLMEDDTNL) form a linker region. Positions 186, 198, 201, and 203 each coordinate [2Fe-2S] cluster. Residues 186 to 203 (CDPGPGKKRRKACKDCTC) form a fe-S binding site A region. 4 residues coordinate [4Fe-4S] cluster: cysteine 244, cysteine 247, cysteine 255, and cysteine 258. Short sequence motifs (cx2C motif) lie at residues 244–247 (CGSC) and 255–258 (CDGC). The tract at residues 244-258 (CGSCALGDAFRCDGC) is fe-S binding site B.

It belongs to the anamorsin family. As to quaternary structure, monomer. Interacts with TAH18. Interacts with MIA40. The cofactor is [2Fe-2S] cluster. It depends on [4Fe-4S] cluster as a cofactor.

The protein resides in the cytoplasm. It localises to the mitochondrion intermembrane space. In terms of biological role, component of the cytosolic iron-sulfur (Fe-S) protein assembly (CIA) machinery required for the maturation of extramitochondrial Fe-S proteins. Part of an electron transfer chain functioning in an early step of cytosolic Fe-S biogenesis, facilitating the de novo assembly of a [4Fe-4S] cluster on the scaffold complex CFD1-NBP35. Electrons are transferred to DRE2 from NADPH via the FAD- and FMN-containing protein TAH18. TAH18-DRE2 are also required for the assembly of the diferric tyrosyl radical cofactor of ribonucleotide reductase (RNR), probably by providing electrons for reduction during radical cofactor maturation in the catalytic small subunit RNR2. In Yarrowia lipolytica (strain CLIB 122 / E 150) (Yeast), this protein is Fe-S cluster assembly protein DRE2.